The chain runs to 370 residues: Putative replication factor C small subunit L478 (370 aa).

Residue 41–48 (GPSGSGKK) participates in ATP binding. Basic and acidic residues predominate over residues 342-353 (RNKEPEKSEKTK). Positions 342-370 (RNKEPEKSEKTKSKTGKLSRTNSKKTIKN) are disordered. Residues 354–370 (SKTGKLSRTNSKKTIKN) are compositionally biased toward basic residues.

It belongs to the activator 1 small subunits family. RfcS subfamily.

Its function is as follows. Part of the RFC clamp loader complex which loads the PCNA sliding clamp onto DNA. This Acanthamoeba polyphaga (Amoeba) protein is Putative replication factor C small subunit L478.